Reading from the N-terminus, the 156-residue chain is DNA gyrase inhibitor (156 aa).

The protein belongs to the DNA gyrase inhibitor family. As to quaternary structure, interacts with DNA gyrase.

It localises to the cytoplasm. Its function is as follows. Inhibits the supercoiling activity of DNA gyrase. Acts by inhibiting DNA gyrase at an early step, prior to (or at the step of) binding of DNA by the gyrase. It protects cells against toxins that target DNA gyrase, by inhibiting activity of these toxins and reducing the formation of lethal double-strand breaks in the cell. The protein is DNA gyrase inhibitor of Serratia proteamaculans (strain 568).